Here is a 194-residue protein sequence, read N- to C-terminus: MKIKKADFVKSAVYEKDYPEQLDKMEFAFVGRSNVGKSSLINSLTSRLKLARTSKTPGRTQLINYFLINDEFYIVDLPGYGFAKVPKEMKKQWGQTMERYIASKRKKLVFVLLDIRRVPSDEDIEMLEWLEYNEMDYKIIFTKIDKLSNNERAKQLKAIKTRLVFDNEDVFFHSSLTNKGRDEILNFMEEKLNN.

Residues 23–194 (DKMEFAFVGR…LNFMEEKLNN (172 aa)) enclose the EngB-type G domain. GTP contacts are provided by residues 31 to 38 (GRSNVGKS), 58 to 62 (GRTQL), 76 to 79 (DLPG), 142 to 145 (TKID), and 173 to 175 (HSS). 2 residues coordinate Mg(2+): Ser38 and Thr60.

It belongs to the TRAFAC class TrmE-Era-EngA-EngB-Septin-like GTPase superfamily. EngB GTPase family. Mg(2+) is required as a cofactor.

In terms of biological role, necessary for normal cell division and for the maintenance of normal septation. The protein is Probable GTP-binding protein EngB of Fusobacterium nucleatum subsp. nucleatum (strain ATCC 25586 / DSM 15643 / BCRC 10681 / CIP 101130 / JCM 8532 / KCTC 2640 / LMG 13131 / VPI 4355).